The following is a 354-amino-acid chain: MYGNNNPGSNNNNGGYPPYGYNNKSSGGRGFGMSHSLPSGMSRYAFSPQDTEFSFPSSSSRRGYNDFPGCGGSGGNGGSANNLGGGNMCHLPPMASNNSLNNLCGLSLGSGGSDDLMNDPRASNTNLIVNYLPQDMTDRELYALFRAIGPINTCRIMRDYKTGYSFGYAFVDFTSEMDSQRAIKVLNGITVRNKRLKVSYARPGGESIKDTNLYVTNLPRTITDDQLDTIFGKYGSIVQKNILRDKLTGRPRGVAFVRYNKREEAQEAISALNNVIPEGGSQPLSVRLAEEHGKAKAAHFMSQMGVVPANVPPPPPQPPAHMAAAFNMMHRGRSIKSQQRFQNSHPYFDAKKFI.

Positions 1–21 are disordered; sequence MYGNNNPGSNNNNGGYPPYGY. 2 RRM domains span residues 125–203 and 211–291; these read TNLI…YARP and TNLY…LAEE.

As to quaternary structure, part of a complex containing fl(2)d, Sxl and vir. Part of a complex composed of at least mei-P26, bam, bgcn and Sxl; this complex is involved in translational repression of nanos mRNA. interacts with mei-p26. Interacts with nito. Interacts with Unr; cooperates with Unr to prevent translation of msl-2 transcripts. Interacts with how; promoting nuclear retention of msl-2 transcripts. As to expression, expressed in somatic tissues, but not in the pole cells, which are the precursors of the germline. Expressed in the anterior of the germarium.

Its subcellular location is the nucleus. It localises to the cytoplasm. Sex determination switch protein, which controls sexual development and dosage compensation in females. Sxl protein is only active in females: it is inactive in males throughout development. Acts as a mRNA-binding protein, which specifically binds to a subset of pre-mRNAs and mRNAs and regulates their processing and/or translation. Binds nanos mRNA and is involved in bam-bgcn mediated repression of nanos mRNA translation. Promotes sexual development by controlling the female-specific alternative splicing of the transformer (tra) pre-mRNA: binds tightly to a characteristic uridine-rich polypyrimidine tract at the non-sex specific 3' splice site in one of the tra introns, preventing the general splicing factor U2AF from binding to this site and forcing it to bind to the female-specific 3' splice site. Acts as an inhibitor of dosage compensation in females by preventing production of msl-2 protein, an essential component of the MSL complex, the complex that mediates X-chromosome dosage compensation. Specifically binds to uridine stretches in both the 5'- and 3'-UTR of msl-2 transcripts. Sxl first acts at the splicing level by promoting retention of an intron in the 5' UTR of msl-2 pre-mRNA. The retained intron contains Sxl-binding sites that are required for subsequent steps of repression: after msl-2 mRNA export into the cytoplasm, Sxl coordinates its translational repression by targeting early steps of translation initiation. Together with how, Sxl also prevents production of msl-2 protein by preventing nuclear export of msl-2 transcripts. In terms of biological role, embryo-specific product, which is expressed early only in female embryos and specifies female-adult specific splicing. The sequence is that of Protein sex-lethal from Drosophila melanogaster (Fruit fly).